The primary structure comprises 160 residues: SsrA-binding protein (160 aa).

Belongs to the SmpB family.

Its subcellular location is the cytoplasm. Its function is as follows. Required for rescue of stalled ribosomes mediated by trans-translation. Binds to transfer-messenger RNA (tmRNA), required for stable association of tmRNA with ribosomes. tmRNA and SmpB together mimic tRNA shape, replacing the anticodon stem-loop with SmpB. tmRNA is encoded by the ssrA gene; the 2 termini fold to resemble tRNA(Ala) and it encodes a 'tag peptide', a short internal open reading frame. During trans-translation Ala-aminoacylated tmRNA acts like a tRNA, entering the A-site of stalled ribosomes, displacing the stalled mRNA. The ribosome then switches to translate the ORF on the tmRNA; the nascent peptide is terminated with the 'tag peptide' encoded by the tmRNA and targeted for degradation. The ribosome is freed to recommence translation, which seems to be the essential function of trans-translation. The protein is SsrA-binding protein of Erwinia tasmaniensis (strain DSM 17950 / CFBP 7177 / CIP 109463 / NCPPB 4357 / Et1/99).